Here is a 209-residue protein sequence, read N- to C-terminus: Urease accessory protein UreE (209 aa).

Basic and acidic residues predominate over residues 170-196 (EHHGHSHSHSHDHDHDHDHDHDHDHQH). Residues 170–209 (EHHGHSHSHSHDHDHDHDHDHDHDHQHGPSCSHGHHHGHR) form a disordered region.

It belongs to the UreE family.

Its subcellular location is the cytoplasm. Involved in urease metallocenter assembly. Binds nickel. Probably functions as a nickel donor during metallocenter assembly. The chain is Urease accessory protein UreE from Burkholderia mallei (strain NCTC 10247).